The sequence spans 168 residues: Endoribonuclease YbeY (168 aa).

Zn(2+) is bound by residues His126, His130, and His136.

This sequence belongs to the endoribonuclease YbeY family. Requires Zn(2+) as cofactor.

The protein resides in the cytoplasm. Functionally, single strand-specific metallo-endoribonuclease involved in late-stage 70S ribosome quality control and in maturation of the 3' terminus of the 16S rRNA. This Sinorhizobium medicae (strain WSM419) (Ensifer medicae) protein is Endoribonuclease YbeY.